Here is a 295-residue protein sequence, read N- to C-terminus: Ethanolamine ammonia-lyase small subunit (295 aa).

2 residues coordinate adenosylcob(III)alamin: Val-209 and Glu-230.

Belongs to the EutC family. In terms of assembly, the basic unit is a heterodimer which dimerizes to form tetramers. The heterotetramers trimerize; 6 large subunits form a core ring with 6 small subunits projecting outwards. Requires adenosylcob(III)alamin as cofactor.

Its subcellular location is the bacterial microcompartment. It carries out the reaction ethanolamine = acetaldehyde + NH4(+). It participates in amine and polyamine degradation; ethanolamine degradation. Functionally, catalyzes the deamination of various vicinal amino-alcohols to oxo compounds. Allows this organism to utilize ethanolamine as the sole source of nitrogen and carbon in the presence of external vitamin B12. This is Ethanolamine ammonia-lyase small subunit from Clostridium perfringens (strain ATCC 13124 / DSM 756 / JCM 1290 / NCIMB 6125 / NCTC 8237 / Type A).